A 243-amino-acid polypeptide reads, in one-letter code: Ubiquinone/menaquinone biosynthesis C-methyltransferase UbiE (243 aa).

S-adenosyl-L-methionine contacts are provided by residues threonine 69, aspartate 90, and 116–117 (DA).

It belongs to the class I-like SAM-binding methyltransferase superfamily. MenG/UbiE family.

It carries out the reaction a 2-demethylmenaquinol + S-adenosyl-L-methionine = a menaquinol + S-adenosyl-L-homocysteine + H(+). The catalysed reaction is a 2-methoxy-6-(all-trans-polyprenyl)benzene-1,4-diol + S-adenosyl-L-methionine = a 5-methoxy-2-methyl-3-(all-trans-polyprenyl)benzene-1,4-diol + S-adenosyl-L-homocysteine + H(+). It functions in the pathway quinol/quinone metabolism; menaquinone biosynthesis; menaquinol from 1,4-dihydroxy-2-naphthoate: step 2/2. The protein operates within cofactor biosynthesis; ubiquinone biosynthesis. Its function is as follows. Methyltransferase required for the conversion of demethylmenaquinol (DMKH2) to menaquinol (MKH2) and the conversion of 2-polyprenyl-6-methoxy-1,4-benzoquinol (DDMQH2) to 2-polyprenyl-3-methyl-6-methoxy-1,4-benzoquinol (DMQH2). The polypeptide is Ubiquinone/menaquinone biosynthesis C-methyltransferase UbiE (Cupriavidus necator (strain ATCC 17699 / DSM 428 / KCTC 22496 / NCIMB 10442 / H16 / Stanier 337) (Ralstonia eutropha)).